Reading from the N-terminus, the 727-residue chain is Glucans biosynthesis glucosyltransferase H (727 aa).

Residues 18 to 45 (SAMPNERPGAMEPQSLTEMPEGFPRRST) form a disordered region. 7 helical membrane passes run 58–78 (FFVV…MGAV), 90–110 (LVLL…CSGI), 278–298 (LQQF…GWWV), 408–428 (IMAY…LMLA), 460–480 (LFYI…LLLL), 496–516 (IFSV…MMFI), and 572–592 (LLAW…ISAW).

It belongs to the glycosyltransferase 2 family. OpgH subfamily.

It localises to the cell inner membrane. It functions in the pathway glycan metabolism; osmoregulated periplasmic glucan (OPG) biosynthesis. Involved in the biosynthesis of osmoregulated periplasmic glucans (OPGs). This is Glucans biosynthesis glucosyltransferase H from Shewanella putrefaciens (strain CN-32 / ATCC BAA-453).